Here is a 366-residue protein sequence, read N- to C-terminus: Histidinol-phosphate aminotransferase 2 (366 aa).

Residue K226 is modified to N6-(pyridoxal phosphate)lysine.

It belongs to the class-II pyridoxal-phosphate-dependent aminotransferase family. Histidinol-phosphate aminotransferase subfamily. As to quaternary structure, homodimer. The cofactor is pyridoxal 5'-phosphate.

It catalyses the reaction L-histidinol phosphate + 2-oxoglutarate = 3-(imidazol-4-yl)-2-oxopropyl phosphate + L-glutamate. Its pathway is amino-acid biosynthesis; L-histidine biosynthesis; L-histidine from 5-phospho-alpha-D-ribose 1-diphosphate: step 7/9. This is Histidinol-phosphate aminotransferase 2 from Cupriavidus pinatubonensis (strain JMP 134 / LMG 1197) (Cupriavidus necator (strain JMP 134)).